The sequence spans 517 residues: UDP-N-acetylmuramyl-tripeptide synthetase (517 aa).

A UDP-N-acetyl-alpha-D-muramoyl-L-alanyl-D-glutamate-binding site is contributed by Ser-38. 116 to 122 (GTKGKTT) provides a ligand contact to ATP. UDP-N-acetyl-alpha-D-muramoyl-L-alanyl-D-glutamate contacts are provided by residues Asn-160, 162 to 163 (TT), Ser-189, and Arg-197. Position 231 is an N6-carboxylysine (Lys-231).

This sequence belongs to the MurCDEF family. MurE subfamily. Post-translationally, carboxylation is probably crucial for Mg(2+) binding and, consequently, for the gamma-phosphate positioning of ATP.

The protein localises to the cytoplasm. Its pathway is cell wall biogenesis; peptidoglycan biosynthesis. Catalyzes the addition of an amino acid to the nucleotide precursor UDP-N-acetylmuramoyl-L-alanyl-D-glutamate (UMAG) in the biosynthesis of bacterial cell-wall peptidoglycan. The chain is UDP-N-acetylmuramyl-tripeptide synthetase from Lacticaseibacillus paracasei (strain ATCC 334 / BCRC 17002 / CCUG 31169 / CIP 107868 / KCTC 3260 / NRRL B-441) (Lactobacillus paracasei).